Reading from the N-terminus, the 580-residue chain is Tyrosyl-DNA phosphodiesterase 1 (580 aa).

The interval 65–117 is disordered; the sequence is ATNKEQEAHSSSSKPAVTAPVASGSSSSGSLDTNPSGSSASGPAASQDTSNLA. Low complexity predominate over residues 87-110; that stretch reads SGSSSSGSLDTNPSGSSASGPAAS. The Nucleophile role is filled by His-248. Lys-250 contributes to the substrate binding site. An interaction with DNA region spans residues 387-390; sequence SIGS. The active-site Proton donor/acceptor is His-479. Lys-481 contacts substrate.

It belongs to the tyrosyl-DNA phosphodiesterase family. As to expression, expressed in the body and at higher levels in the head. Expressed in the delaminating neuroblasts and a few ganglion mother cells in stage 11-14 embryonic central nervous system. Weak expression is seen in gonads at stage 16. Expressed in the brain; expression is regulated by DIP2.

It localises to the nucleus. It is found in the cytoplasm. DNA repair enzyme that can remove a variety of covalent adducts from DNA through hydrolysis of a 3'-phosphodiester bond, giving rise to DNA with a free 3' phosphate. Catalyzes the hydrolysis of dead-end complexes between DNA and the topoisomerase I active site tyrosine residue. Hydrolyzes 3'-phosphoglycolates on protruding 3' ends on DNA double-strand breaks due to DNA damage by radiation and free radicals. Acts on blunt-ended double-strand DNA breaks and on single-stranded DNA. May have low 3'exonuclease activity and may be able to remove a single nucleoside from the 3'end of DNA and RNA molecules with 3'hydroxyl groups. Has no exonuclease activity towards DNA or RNA with a 3'phosphate. Required for normal polarization of epidermal cells, correct subcellular location of the Crb complex to the apical lateral membrane, and for normal neuronal development during embryonic development. Contributes to maintenance of epithelial cells in response to topoisomerase-1-mediated and oxidative DNA damage. Required for precise axonal bifurcation in mushroom body neurons. Required for maintenance of normal neuronal function. The protein is Tyrosyl-DNA phosphodiesterase 1 of Drosophila melanogaster (Fruit fly).